We begin with the raw amino-acid sequence, 377 residues long: Homoserine O-acetyltransferase (377 aa).

One can recognise an AB hydrolase-1 domain in the interval 47-355 (NAILICHALT…DYGHDAFLLE (309 aa)). S153 acts as the Nucleophile in catalysis. R222 provides a ligand contact to substrate. Catalysis depends on residues D316 and H349. D350 lines the substrate pocket.

It belongs to the AB hydrolase superfamily. MetX family. In terms of assembly, homodimer.

It is found in the cytoplasm. It catalyses the reaction L-homoserine + acetyl-CoA = O-acetyl-L-homoserine + CoA. Its pathway is amino-acid biosynthesis; L-methionine biosynthesis via de novo pathway; O-acetyl-L-homoserine from L-homoserine: step 1/1. In terms of biological role, transfers an acetyl group from acetyl-CoA to L-homoserine, forming acetyl-L-homoserine. This Deferribacter desulfuricans (strain DSM 14783 / JCM 11476 / NBRC 101012 / SSM1) protein is Homoserine O-acetyltransferase.